A 537-amino-acid chain; its full sequence is Pancreatic secretory granule membrane major glycoprotein GP2 (537 aa).

An N-terminal signal peptide occupies residues 1-28 (MPHLMERMVGSGLLWLALVSCILTQASA). The interval 41-60 (SYGLDLDCGAPGTPEAHVCF) is beta hairpin. Cystine bridges form between Cys-48-Cys-59, Cys-63-Cys-157, Cys-85-Cys-172, Cys-107-Cys-145, Cys-113-Cys-177, Cys-138-Cys-146, Cys-190-Cys-200, Cys-194-Cys-209, Cys-211-Cys-241, Cys-229-Cys-320, and Cys-261-Cys-284. Residues 61 to 81 (DPCQNYTLLDEPFRSTENSAG) form a D10C region. N-linked (GlcNAc...) (high mannose) asparagine glycosylation occurs at Asn-65. 3 N-linked (GlcNAc...) asparagine glycosylation sites follow: Asn-88, Asn-122, and Asn-134. One can recognise an EGF-like domain in the interval 186 to 230 (VEDKCEKACRPEEECLALNSTWGCFCRQDLNSSDVHSLQPQLDCG). Residues Asn-204, Asn-216, and Asn-260 are each glycosylated (N-linked (GlcNAc...) asparagine). The interval 228 to 321 (DCGPREIKVK…TILNINFQCA (94 aa)) is ZP-N. Residues 228–484 (DCGPREIKVK…PSCSRSQVRS (257 aa)) enclose the ZP domain. Asn-291 and Asn-342 each carry an N-linked (GlcNAc...) asparagine glycan. The flexible ZP-N/ZP-C linker stretch occupies residues 322–345 (YPLDMKVSLQAALQPIVSSLNVSV). The interval 346–357 (DGNGEFIVRMAL) is internal hydrophobic patch (IHP). A ZP-C region spans residues 346–484 (DGNGEFIVRM…PSCSRSQVRS (139 aa)). The N-linked (GlcNAc...) asparagine glycan is linked to Asn-362. 3 cysteine pairs are disulfide-bonded: Cys-401–Cys-461, Cys-422–Cys-477, and Cys-466–Cys-473. The tract at residues 491–499 (LARVLDLGP) is external hydrophobic patch (EHP). Residue Asn-512 is the site of GPI-anchor amidated asparagine attachment. The propeptide at 513 to 537 (GTPSTAGFLVAWPMVLLTVLLAWLF) is removed in mature form.

As to quaternary structure, interacts with SYCN. Interacts with bacterial adhesin fimH. N-glycosylated. Glycosylated Asn-65 may be required for interaction with bacterial adhesin fimH. As to expression, expressed in pancreas (at protein level). Specifically expressed by M (microfold) cells which are atypical epithelial cells of the intestine (at protein level).

Its subcellular location is the zymogen granule membrane. It localises to the secreted. The protein resides in the cell membrane. It is found in the apical cell membrane. The protein localises to the membrane raft. Its subcellular location is the endosome. In terms of biological role, functions as an intestinal M-cell transcytotic receptor specific for type-I-piliated bacteria that participates in the mucosal immune response toward these bacteria. At the apical membrane of M-cells it binds fimH, a protein of the bacteria type I pilus tip. Internalizes bound bacteria, like E.coli and S.typhimurium, from the lumen of the intestine and delivers them, through M-cells, to the underlying organized lymphoid follicles where they are captured by antigen-presenting dendritic cells to elicit a mucosal immune response. In Homo sapiens (Human), this protein is Pancreatic secretory granule membrane major glycoprotein GP2.